Reading from the N-terminus, the 495-residue chain is MAKKYVVALDQGTTSSRAIIFDHDANIVSVSQREFPQIYPQAGWVEHDPMEIWASQSSTLIELLARSGIHGSEVAAIGITNQRETTVIWDKLTGKPVYNAIVWQCRRSSHICDELKAQGLEDYVRETTGLLLDPYFSGTKIKWILDNVAGVRERAEKGELLFGTIDTWLVWKLTEGKVHVTDPTNASRTLLFNIHTQQWDSKLLEALNIPESLLPEVKPSCAVYGKTRIAGEGGEISIAGIAGDQQSALFGQLCIDEGMAKNTYGTGCFLLMNTGKQAVKSTHGLLTTVAIGADCEVNYALEGAVFMGGATIQWLRDELGLIRDAQDTEYFASKVEDTNGVYLVPAFVGLGAPYWDPNARGALVGLTRGSNRNHIIRAALEAIAYQSRDLLDAMAKDSGVMLKQLKVDGGAVSNDFLMQFQADITNVEVQRPAITETTAMGAAFLAGLAVGFWSSTSELKHKADIERTFIPSISAEKCDELYCGWNRAVTQTIKS.

Thr13 contributes to the ADP binding site. 3 residues coordinate ATP: Thr13, Thr14, and Ser15. Thr13 is a sn-glycerol 3-phosphate binding site. Arg17 serves as a coordination point for ADP. Sn-glycerol 3-phosphate-binding residues include Arg83, Glu84, Tyr135, and Asp244. The glycerol site is built by Arg83, Glu84, Tyr135, Asp244, and Gln245. Positions 266 and 309 each coordinate ADP. The ATP site is built by Thr266, Gly309, Gln313, and Gly410. Residues Gly410 and Asn414 each coordinate ADP.

This sequence belongs to the FGGY kinase family.

The catalysed reaction is glycerol + ATP = sn-glycerol 3-phosphate + ADP + H(+). The protein operates within polyol metabolism; glycerol degradation via glycerol kinase pathway; sn-glycerol 3-phosphate from glycerol: step 1/1. With respect to regulation, inhibited by fructose 1,6-bisphosphate (FBP). Its function is as follows. Key enzyme in the regulation of glycerol uptake and metabolism. Catalyzes the phosphorylation of glycerol to yield sn-glycerol 3-phosphate. The protein is Glycerol kinase of Shewanella sediminis (strain HAW-EB3).